The primary structure comprises 189 residues: Peptidyl-tRNA hydrolase (189 aa).

Residue Tyr16 coordinates tRNA. Residue His21 is the Proton acceptor of the active site. Positions 67, 69, and 115 each coordinate tRNA.

This sequence belongs to the PTH family. Monomer.

The protein localises to the cytoplasm. It carries out the reaction an N-acyl-L-alpha-aminoacyl-tRNA + H2O = an N-acyl-L-amino acid + a tRNA + H(+). Functionally, hydrolyzes ribosome-free peptidyl-tRNAs (with 1 or more amino acids incorporated), which drop off the ribosome during protein synthesis, or as a result of ribosome stalling. Its function is as follows. Catalyzes the release of premature peptidyl moieties from peptidyl-tRNA molecules trapped in stalled 50S ribosomal subunits, and thus maintains levels of free tRNAs and 50S ribosomes. The sequence is that of Peptidyl-tRNA hydrolase from Legionella pneumophila (strain Lens).